We begin with the raw amino-acid sequence, 268 residues long: Tropinone reductase homolog (268 aa).

Residue 21-45 (LVTGGTRGIGYAIVEELANFGAEVY) participates in NADP(+) binding. S154 is a binding site for substrate. Y167 serves as the catalytic Proton acceptor.

This sequence belongs to the short-chain dehydrogenases/reductases (SDR) family.

The polypeptide is Tropinone reductase homolog (Datura stramonium (Jimsonweed)).